We begin with the raw amino-acid sequence, 321 residues long: Sideroflexin-3 (321 aa).

Met-1 is subject to N-acetylmethionine. 4 helical membrane-spanning segments follow: residues 146–164 (LGTA…ALGL), 174–194 (LVGR…NIPL), 225–245 (IFQV…IPPV), and 266–286 (LQVG…CALF).

Belongs to the sideroflexin family.

It is found in the mitochondrion membrane. It catalyses the reaction L-serine(in) = L-serine(out). Mitochondrial serine transporter that mediates transport of serine into mitochondria, an important step of the one-carbon metabolism pathway. Mitochondrial serine is converted to glycine and formate, which then exits to the cytosol where it is used to generate the charged folates that serve as one-carbon donors. The sequence is that of Sideroflexin-3 (Sfxn3) from Rattus norvegicus (Rat).